The primary structure comprises 208 residues: MASITNLASSLSSLSFSSQVSQRPNTISFPRANSVFALPAKSARRASLSITATVSAPPEEEEIVELKKYVKSRLPGGFAAQKIIGTGRRKCAIARVVLQEGTGKVIINYRDAKEYLQGNPLWLQYVKVPLVTLGYENSYDIFVKAHGGGLSGQAQAITLGVARALLKVSADHRSPLKKEGLLTRDARVVERKKAGLKKARKAPQFSKR.

The transit peptide at Met-1–Ala-52 directs the protein to the chloroplast.

The protein belongs to the universal ribosomal protein uS9 family.

It localises to the plastid. It is found in the chloroplast. In terms of biological role, binds directly to 16S ribosomal RNA. In Arabidopsis thaliana (Mouse-ear cress), this protein is Small ribosomal subunit protein uS9c (RPS9).